A 215-amino-acid chain; its full sequence is NADH-quinone oxidoreductase subunit C (215 aa).

It belongs to the complex I 30 kDa subunit family. As to quaternary structure, NDH-1 is composed of 14 different subunits. Subunits NuoB, C, D, E, F, and G constitute the peripheral sector of the complex.

It is found in the cell inner membrane. The catalysed reaction is a quinone + NADH + 5 H(+)(in) = a quinol + NAD(+) + 4 H(+)(out). Functionally, NDH-1 shuttles electrons from NADH, via FMN and iron-sulfur (Fe-S) centers, to quinones in the respiratory chain. The immediate electron acceptor for the enzyme in this species is believed to be ubiquinone. Couples the redox reaction to proton translocation (for every two electrons transferred, four hydrogen ions are translocated across the cytoplasmic membrane), and thus conserves the redox energy in a proton gradient. The polypeptide is NADH-quinone oxidoreductase subunit C (Bordetella parapertussis (strain 12822 / ATCC BAA-587 / NCTC 13253)).